The chain runs to 284 residues: Shikimate dehydrogenase (NADP(+)) (284 aa).

Shikimate-binding positions include 20 to 22 (SIS) and S67. The active-site Proton acceptor is the K71. D83 serves as a coordination point for NADP(+). Shikimate is bound by residues N92 and D107. Residues 129–133 (GAGGA) and I227 each bind NADP(+). A shikimate-binding site is contributed by Y229. G250 lines the NADP(+) pocket.

The protein belongs to the shikimate dehydrogenase family. In terms of assembly, homodimer.

The catalysed reaction is shikimate + NADP(+) = 3-dehydroshikimate + NADPH + H(+). Its pathway is metabolic intermediate biosynthesis; chorismate biosynthesis; chorismate from D-erythrose 4-phosphate and phosphoenolpyruvate: step 4/7. Functionally, involved in the biosynthesis of the chorismate, which leads to the biosynthesis of aromatic amino acids. Catalyzes the reversible NADPH linked reduction of 3-dehydroshikimate (DHSA) to yield shikimate (SA). The protein is Shikimate dehydrogenase (NADP(+)) of Streptococcus pneumoniae (strain JJA).